The following is a 377-amino-acid chain: Anhydro-N-acetylmuramic acid kinase (377 aa).

12–19 contributes to the ATP binding site; sequence GTSLDGID.

This sequence belongs to the anhydro-N-acetylmuramic acid kinase family.

The enzyme catalyses 1,6-anhydro-N-acetyl-beta-muramate + ATP + H2O = N-acetyl-D-muramate 6-phosphate + ADP + H(+). The protein operates within amino-sugar metabolism; 1,6-anhydro-N-acetylmuramate degradation. It functions in the pathway cell wall biogenesis; peptidoglycan recycling. Its function is as follows. Catalyzes the specific phosphorylation of 1,6-anhydro-N-acetylmuramic acid (anhMurNAc) with the simultaneous cleavage of the 1,6-anhydro ring, generating MurNAc-6-P. Is required for the utilization of anhMurNAc either imported from the medium or derived from its own cell wall murein, and thus plays a role in cell wall recycling. In Methylorubrum extorquens (strain CM4 / NCIMB 13688) (Methylobacterium extorquens), this protein is Anhydro-N-acetylmuramic acid kinase.